The following is a 196-amino-acid chain: ATP-dependent Clp protease proteolytic subunit (196 aa).

S96 functions as the Nucleophile in the catalytic mechanism. The active site involves H121.

This sequence belongs to the peptidase S14 family. In terms of assembly, fourteen ClpP subunits assemble into 2 heptameric rings which stack back to back to give a disk-like structure with a central cavity, resembling the structure of eukaryotic proteasomes.

It is found in the cytoplasm. It catalyses the reaction Hydrolysis of proteins to small peptides in the presence of ATP and magnesium. alpha-casein is the usual test substrate. In the absence of ATP, only oligopeptides shorter than five residues are hydrolyzed (such as succinyl-Leu-Tyr-|-NHMec, and Leu-Tyr-Leu-|-Tyr-Trp, in which cleavage of the -Tyr-|-Leu- and -Tyr-|-Trp bonds also occurs).. Functionally, cleaves peptides in various proteins in a process that requires ATP hydrolysis. Has a chymotrypsin-like activity. Plays a major role in the degradation of misfolded proteins. In Streptococcus pyogenes serotype M3 (strain SSI-1), this protein is ATP-dependent Clp protease proteolytic subunit.